Reading from the N-terminus, the 81-residue chain is RNA-binding protein Hfq (81 aa).

The 61-residue stretch at 11-71 (DIFLNSARKN…VSTITPLRPI (61 aa)) folds into the Sm domain.

It belongs to the Hfq family. In terms of assembly, homohexamer.

Functionally, RNA chaperone that binds small regulatory RNA (sRNAs) and mRNAs to facilitate mRNA translational regulation in response to envelope stress, environmental stress and changes in metabolite concentrations. Also binds with high specificity to tRNAs. This chain is RNA-binding protein Hfq, found in Clostridium acetobutylicum (strain ATCC 824 / DSM 792 / JCM 1419 / IAM 19013 / LMG 5710 / NBRC 13948 / NRRL B-527 / VKM B-1787 / 2291 / W).